Consider the following 210-residue polypeptide: Pyrrolidone-carboxylate peptidase (210 aa).

Catalysis depends on residues Glu80, Cys143, and His162.

It belongs to the peptidase C15 family. Homotetramer.

The protein localises to the cytoplasm. The enzyme catalyses Release of an N-terminal pyroglutamyl group from a polypeptide, the second amino acid generally not being Pro.. Its function is as follows. Removes 5-oxoproline from various penultimate amino acid residues except L-proline. The polypeptide is Pyrrolidone-carboxylate peptidase (Chromobacterium violaceum (strain ATCC 12472 / DSM 30191 / JCM 1249 / CCUG 213 / NBRC 12614 / NCIMB 9131 / NCTC 9757 / MK)).